The following is an 868-amino-acid chain: Translation initiation factor IF-2 (868 aa).

Positions 201 to 269 (KEEVKPEKVS…GTEKSDKYRE (69 aa)) are disordered. The segment covering 249-260 (RGGRSKFKKKKG) has biased composition (basic residues). The tr-type G domain maps to 368–537 (GRAPVVTIMG…LLQSEVLELK (170 aa)). The tract at residues 377–384 (GHVDHGKT) is G1. A GTP-binding site is contributed by 377–384 (GHVDHGKT). The tract at residues 402–406 (GITQH) is G2. The G3 stretch occupies residues 423-426 (DTPG). GTP contacts are provided by residues 423-427 (DTPGH) and 477-480 (NKMD). The G4 stretch occupies residues 477–480 (NKMD). The G5 stretch occupies residues 513–515 (SAK).

Belongs to the TRAFAC class translation factor GTPase superfamily. Classic translation factor GTPase family. IF-2 subfamily.

It is found in the cytoplasm. In terms of biological role, one of the essential components for the initiation of protein synthesis. Protects formylmethionyl-tRNA from spontaneous hydrolysis and promotes its binding to the 30S ribosomal subunits. Also involved in the hydrolysis of GTP during the formation of the 70S ribosomal complex. The sequence is that of Translation initiation factor IF-2 from Legionella pneumophila (strain Corby).